We begin with the raw amino-acid sequence, 324 residues long: Sperm acrosome membrane-associated protein 6 (324 aa).

The N-terminal stretch at 1–26 (MALLALASAVPSALLALAVFRVPAWA) is a signal peptide. A CXXC motif motif is present at residues 27 to 30 (CLLC). 6 disulfides stabilise this stretch: cysteine 27-cysteine 139, cysteine 30-cysteine 142, cysteine 41-cysteine 55, cysteine 124-cysteine 147, cysteine 128-cysteine 153, and cysteine 170-cysteine 226. Residues 27 to 295 (CLLCFTTYSE…RPEALTPSNL (269 aa)) are Extracellular-facing. A CXXC motif motif is present at residues 139–142 (CSGC). An Ig-like domain is found at 150–236 (PLDCPVQDVT…VIKQDQRPLA (87 aa)). The N-linked (GlcNAc...) asparagine glycan is linked to asparagine 243. A helical membrane pass occupies residues 296-316 (FLLAVLGALASASATVLAWMF). Topologically, residues 317 to 324 (FRWYCSGN) are cytoplasmic.

It belongs to the SPACA6 family. In terms of assembly, forms a complex with IZUMO1 and TMEM81 on spermatocyte cell membrane required for fertilization. Detected at the sperm head, equatorial region, neck and midpiece (at protein level). Expressed in testis.

It localises to the cytoplasmic vesicle. Its subcellular location is the secretory vesicle. The protein resides in the acrosome membrane. Functionally, sperm protein required for fusion of sperm with the egg membrane during fertilization. May regulate the expression of sperm surface protein DCST2. In Homo sapiens (Human), this protein is Sperm acrosome membrane-associated protein 6.